Consider the following 124-residue polypeptide: UPF0538 protein (124 aa).

It belongs to the UPF0538 family.

This Dictyostelium discoideum (Social amoeba) protein is UPF0538 protein.